A 356-amino-acid chain; its full sequence is OVARIAN TUMOR DOMAIN-containing deubiquitinating enzyme 10 (356 aa).

The disordered stretch occupies residues 86 to 117 (DYSHQNQQQQHQQEGYTNNYSNNNNGYAWNDQ). Residues 89-115 (HQNQQQQHQQEGYTNNYSNNNNGYAWN) are compositionally biased toward low complexity. The OTU domain occupies 213–337 (FTEVKVPGDG…EVHYNAIYLN (125 aa)). Asp-221 is a catalytic residue. Cys-224 acts as the Nucleophile in catalysis. His-330 is an active-site residue.

Belongs to the peptidase C85 family.

It carries out the reaction Thiol-dependent hydrolysis of ester, thioester, amide, peptide and isopeptide bonds formed by the C-terminal Gly of ubiquitin (a 76-residue protein attached to proteins as an intracellular targeting signal).. Its function is as follows. Hydrolase that can remove conjugated ubiquitin from proteins in vitro and may therefore play an important regulatory role at the level of protein turnover by preventing degradation. Cysteine protease with a preference for 'Lys-63' over 'Lys-48' over 'Met-1' -linked ubiquitin (UB) tetramers as substrates. Also cleaves RUB-GST fusion. The chain is OVARIAN TUMOR DOMAIN-containing deubiquitinating enzyme 10 from Arabidopsis thaliana (Mouse-ear cress).